Reading from the N-terminus, the 590-residue chain is Proline--tRNA ligase (590 aa).

This sequence belongs to the class-II aminoacyl-tRNA synthetase family. ProS type 1 subfamily. In terms of assembly, homodimer.

Its subcellular location is the cytoplasm. The catalysed reaction is tRNA(Pro) + L-proline + ATP = L-prolyl-tRNA(Pro) + AMP + diphosphate. In terms of biological role, catalyzes the attachment of proline to tRNA(Pro) in a two-step reaction: proline is first activated by ATP to form Pro-AMP and then transferred to the acceptor end of tRNA(Pro). As ProRS can inadvertently accommodate and process non-cognate amino acids such as alanine and cysteine, to avoid such errors it has two additional distinct editing activities against alanine. One activity is designated as 'pretransfer' editing and involves the tRNA(Pro)-independent hydrolysis of activated Ala-AMP. The other activity is designated 'posttransfer' editing and involves deacylation of mischarged Ala-tRNA(Pro). The misacylated Cys-tRNA(Pro) is not edited by ProRS. This is Proline--tRNA ligase from Leifsonia xyli subsp. xyli (strain CTCB07).